The following is a 396-amino-acid chain: Protein nipi-4 (396 aa).

The Extracellular segment spans residues methionine 1–tyrosine 20. Asparagine 15 is a glycosylation site (N-linked (GlcNAc...) asparagine). The helical transmembrane segment at methionine 21–phenylalanine 41 threads the bilayer. Residues cysteine 42–tyrosine 396 are Cytoplasmic-facing. The 288-residue stretch at glutamate 81 to valine 368 folds into the Protein kinase domain. ATP is bound by residues isoleucine 87 to isoleucine 95 and lysine 111.

This sequence belongs to the protein kinase superfamily. Tyr protein kinase family. Expressed in the epidermis of larvae and adults and in vulval and rectal cells.

It localises to the membrane. Functionally, pseudokinase which plays a role in resistance to fungal infection by promoting expression of antimicrobial peptides (nlp-29, nlp-31, nlp-34, cnc-1, cnc-2 and cnc-4) in the epidermis. In addition, up-regulates nlp-29 expression upon physical wounding and in response to phorbol ester PMA treatment. This chain is Protein nipi-4, found in Caenorhabditis elegans.